Here is a 446-residue protein sequence, read N- to C-terminus: Acyl-lipid (8-3)-desaturase (446 aa).

One can recognise a Cytochrome b5 heme-binding domain in the interval 6 to 82; the sequence is GKTFTWEELA…MKKYYVGTLV (77 aa). Heme-binding residues include histidine 41 and histidine 64. 2 helical membrane-spanning segments follow: residues 125–145 and 150–170; these read ALIF…PFVV and LQVV…LNPL. Residues 171 to 175 carry the Histidine box-1 motif; sequence HDASH. The Histidine box-2 motif lies at 207–212; it reads HMLGHH. The Histidine box-3 signature appears at 387–391; the sequence is QAVHH.

Belongs to the fatty acid desaturase type 1 family. It depends on Fe(2+) as a cofactor.

The protein resides in the membrane. It catalyses the reaction an (8Z,11Z,14Z)-icosatrienoyl-containing glycerolipid + 2 Fe(II)-[cytochrome b5] + O2 + 2 H(+) = (5Z,8Z,11Z,14Z)-eicosatetraenoyl-containing glycerolipid + 2 Fe(III)-[cytochrome b5] + 2 H2O. It carries out the reaction an (8Z,11Z,14Z,17Z)-eicosatetraenoyl-containing glycerolipid + 2 Fe(II)-[cytochrome b5] + O2 + 2 H(+) = a (5Z,8Z,11Z,14Z,17Z)-eicosapentaenoyl-containing glycerolipid + 2 Fe(III)-[cytochrome b5] + 2 H2O. Fatty acid desaturase that introduces a cis double bond at the 5-position in 20-carbon polyunsaturated fatty acids incorporated in a glycerolipid that contain a Delta(8) double bond. Involved in the conversion of di-homo-Delta-linolenic acid to arachidonic acid. Essential in the production of eicosanoids. The sequence is that of Acyl-lipid (8-3)-desaturase (DES1) from Mortierella alpina (Oleaginous fungus).